Reading from the N-terminus, the 245-residue chain is tRNA pseudouridine synthase A (245 aa).

Catalysis depends on aspartate 52, which acts as the Nucleophile. Tyrosine 110 provides a ligand contact to substrate.

Belongs to the tRNA pseudouridine synthase TruA family. In terms of assembly, homodimer.

The catalysed reaction is uridine(38/39/40) in tRNA = pseudouridine(38/39/40) in tRNA. Formation of pseudouridine at positions 38, 39 and 40 in the anticodon stem and loop of transfer RNAs. The polypeptide is tRNA pseudouridine synthase A (Ruminiclostridium cellulolyticum (strain ATCC 35319 / DSM 5812 / JCM 6584 / H10) (Clostridium cellulolyticum)).